The chain runs to 87 residues: Small ribosomal subunit protein uS17 (87 aa).

The protein belongs to the universal ribosomal protein uS17 family. Part of the 30S ribosomal subunit.

One of the primary rRNA binding proteins, it binds specifically to the 5'-end of 16S ribosomal RNA. This is Small ribosomal subunit protein uS17 from Bacillus licheniformis (strain ATCC 14580 / DSM 13 / JCM 2505 / CCUG 7422 / NBRC 12200 / NCIMB 9375 / NCTC 10341 / NRRL NRS-1264 / Gibson 46).